Here is a 258-residue protein sequence, read N- to C-terminus: Serine protease VLSP-3 (258 aa).

The signal sequence occupies residues 1 to 18; that stretch reads MVLIRVLANLLVLQLSYA. A propeptide spanning residues 19–24 is cleaved from the precursor; that stretch reads QKSSEL. One can recognise a Peptidase S1 domain in the interval 25–249; sequence VIGGDECNIN…YTDWIQSIIA (225 aa). 6 disulfide bridges follow: Cys-31–Cys-163, Cys-50–Cys-66, Cys-98–Cys-256, Cys-142–Cys-210, Cys-174–Cys-189, and Cys-200–Cys-225. N-linked (GlcNAc...) asparagine glycosylation occurs at Asn-44. His-65 functions as the Charge relay system in the catalytic mechanism. Residues Asn-79 and Asn-103 are each glycosylated (N-linked (GlcNAc...) asparagine). Catalysis depends on Asp-110, which acts as the Charge relay system. Residues Asn-154 and Asn-170 are each glycosylated (N-linked (GlcNAc...) asparagine). The active-site Charge relay system is Ser-204. N-linked (GlcNAc...) asparagine glycosylation occurs at Asn-251.

It belongs to the peptidase S1 family. Snake venom subfamily. As to quaternary structure, monomer. In terms of tissue distribution, expressed by the venom gland.

It is found in the secreted. Its function is as follows. Snake venom serine protease that may act in the hemostasis system of the prey. This chain is Serine protease VLSP-3, found in Macrovipera lebetinus (Levantine viper).